We begin with the raw amino-acid sequence, 227 residues long: Probable 2-phosphosulfolactate phosphatase (227 aa).

It belongs to the ComB family. The cofactor is Mg(2+).

It carries out the reaction (2R)-O-phospho-3-sulfolactate + H2O = (2R)-3-sulfolactate + phosphate. The protein is Probable 2-phosphosulfolactate phosphatase of Thermotoga petrophila (strain ATCC BAA-488 / DSM 13995 / JCM 10881 / RKU-1).